The primary structure comprises 161 residues: Glycine cleavage system H protein 3 (161 aa).

A Lipoyl-binding domain is found at 40–122; the sequence is TVTLGLTDVG…YGDAWIVKIK (83 aa). Lys-81 carries the N6-lipoyllysine modification.

The protein belongs to the GcvH family. The glycine cleavage system is composed of four proteins: P, T, L and H. Requires (R)-lipoate as cofactor.

The glycine cleavage system catalyzes the degradation of glycine. The H protein shuttles the methylamine group of glycine from the P protein to the T protein. This chain is Glycine cleavage system H protein 3, found in Aquifex aeolicus (strain VF5).